We begin with the raw amino-acid sequence, 1264 residues long: Box A-binding factor (1264 aa).

Residues 1–11 show a composition bias toward basic and acidic residues; sequence MTKTTKPKEKA. Disordered stretches follow at residues 1–25, 161–200, 234–253, 405–463, 523–585, and 599–627; these read MTKT…SGLG, TASD…ESVK, LISH…QHQQ, QLHQ…HALS, NQTQ…SAAT, and HNSS…PAFQ. The segment covering 16-25 has biased composition (gly residues); that stretch reads AVIGSGSGLG. A compositionally biased stretch (low complexity) spans 161 to 171; sequence TASDTAATSEA. A compositionally biased stretch (polar residues) spans 189-198; it reads SKAQNDASES. Basic residues predominate over residues 409 to 421; that stretch reads QQHHHQQQLHHHQ. Composition is skewed to low complexity over residues 422–438, 447–459, and 523–554; these read QQQQ…QQQQ, STSS…PSSS, and NQTQ…QQQQ. The segment covering 555-564 has biased composition (basic residues); sequence QHHHNQHQHH. Composition is skewed to low complexity over residues 565 to 585 and 599 to 614; these read NSSS…SAAT and HNSS…RSSH. The GATA-type zinc-finger motif lies at 803–827; sequence CSNCHTTHTSLWRRNPAGEPVCNAC. Disordered stretches follow at residues 841 to 867, 899 to 1048, and 1181 to 1202; these read TMKK…SKSK, DDMK…SNEN, and EEMD…QHGE. 2 stretches are compositionally biased toward low complexity: residues 909–950 and 985–1007; these read PYNS…GSTS and QMSP…HSPS. A compositionally biased stretch (polar residues) spans 1008-1023; sequence TPTSIFNTPSPTHQLH. Composition is skewed to low complexity over residues 1024–1048 and 1185–1200; these read NNNN…SNEN and QSQQ…QQQH. Serine 1208 and serine 1210 each carry phosphoserine.

As to quaternary structure, interacts (via GATA-type Zn-finger domain) with Bfc; this interaction enhances srp binding to the promoter of crq/croquemort.

The protein resides in the nucleus. In terms of biological role, may function as a transcriptional activator protein and may play a key role in the organogenesis of the fat body. Binds a sequence element (5'-[TA]GATAA-3') found in the larval promoters of all known alcohol dehydrogenase (ADH) genes. Acts as a homeotic gene downstream of the terminal gap gene HKB to promote morphogenesis and differentiation of anterior and posterior midgut. Together with transcriptional cofactor Bfc directly binds the promoter of phagocytic receptor crq/croquemort to upregulate its expression and stimulate efferocytosis in response to apoptotic cells, including during embryogenesis. The sequence is that of Box A-binding factor (srp) from Drosophila melanogaster (Fruit fly).